Consider the following 488-residue polypeptide: Ribosomal RNA small subunit methyltransferase F (488 aa).

Residues 135–141, glutamate 159, aspartate 186, and aspartate 204 contribute to the S-adenosyl-L-methionine site; that span reads ASAPGSK. Catalysis depends on cysteine 257, which acts as the Nucleophile.

It belongs to the class I-like SAM-binding methyltransferase superfamily. RsmB/NOP family.

It localises to the cytoplasm. It catalyses the reaction cytidine(1407) in 16S rRNA + S-adenosyl-L-methionine = 5-methylcytidine(1407) in 16S rRNA + S-adenosyl-L-homocysteine + H(+). Its function is as follows. Specifically methylates the cytosine at position 1407 (m5C1407) of 16S rRNA. The chain is Ribosomal RNA small subunit methyltransferase F from Shewanella pealeana (strain ATCC 700345 / ANG-SQ1).